The following is a 283-amino-acid chain: Probable endonuclease 4 (283 aa).

Residues H69, H109, E145, D179, H182, H216, D229, H231, and E261 each contribute to the Zn(2+) site.

Belongs to the AP endonuclease 2 family. Requires Zn(2+) as cofactor.

The enzyme catalyses Endonucleolytic cleavage to 5'-phosphooligonucleotide end-products.. Endonuclease IV plays a role in DNA repair. It cleaves phosphodiester bonds at apurinic or apyrimidinic (AP) sites, generating a 3'-hydroxyl group and a 5'-terminal sugar phosphate. In Prosthecochloris aestuarii (strain DSM 271 / SK 413), this protein is Probable endonuclease 4.